A 460-amino-acid chain; its full sequence is DNA repair protein RadA (460 aa).

The C4-type zinc-finger motif lies at 11–28 (CNECGADYPRWQGQCSAC). 102–109 (GNPGAGKS) is a binding site for ATP. A RadA KNRFG motif motif is present at residues 258 to 262 (KNRFG). The lon-protease-like stretch occupies residues 357-460 (DVFVNVVGGV…SDALSVFDDL (104 aa)).

This sequence belongs to the RecA family. RadA subfamily.

Functionally, DNA-dependent ATPase involved in processing of recombination intermediates, plays a role in repairing DNA breaks. Stimulates the branch migration of RecA-mediated strand transfer reactions, allowing the 3' invading strand to extend heteroduplex DNA faster. Binds ssDNA in the presence of ADP but not other nucleotides, has ATPase activity that is stimulated by ssDNA and various branched DNA structures, but inhibited by SSB. Does not have RecA's homology-searching function. Genetic experiments involving combination of radA mutations with mutations in recA, recB, recG, recJ, recQ, ruvA and ruvC show it plays a role in recombination and recombinational repair, probably involving stabilizing or processing branched DNA or blocked replication forks. Is genetically synergistic to RecG and RuvABC. May be involved in recovery of genetic rearrangements during replication fork breakdown. In combination with RadD is important in recovery from double-strand DNA breaks (DSB). This Escherichia coli (strain K12) protein is DNA repair protein RadA.